Here is a 217-residue protein sequence, read N- to C-terminus: Peptide methionine sulfoxide reductase MsrA (217 aa).

The active site involves C56.

This sequence belongs to the MsrA Met sulfoxide reductase family.

It catalyses the reaction L-methionyl-[protein] + [thioredoxin]-disulfide + H2O = L-methionyl-(S)-S-oxide-[protein] + [thioredoxin]-dithiol. The enzyme catalyses [thioredoxin]-disulfide + L-methionine + H2O = L-methionine (S)-S-oxide + [thioredoxin]-dithiol. Its function is as follows. Has an important function as a repair enzyme for proteins that have been inactivated by oxidation. Catalyzes the reversible oxidation-reduction of methionine sulfoxide in proteins to methionine. The protein is Peptide methionine sulfoxide reductase MsrA of Corynebacterium melassecola.